Consider the following 227-residue polypeptide: 4'-phosphopantetheinyl transferase PptT (227 aa).

CoA is bound by residues R48, R56, 75 to 78 (KGDK), 92 to 93 (TH), and D114. Residues D114, A115, and E116 each contribute to the Mg(2+) site. CoA contacts are provided by E157, K161, and L171.

This sequence belongs to the P-Pant transferase superfamily. It depends on Mg(2+) as a cofactor.

The enzyme catalyses apo-[ACP] + CoA = holo-[ACP] + adenosine 3',5'-bisphosphate + H(+). With respect to regulation, inhibited by the amidino-urea compound 1-[(2,6-diethylphenyl)-3-N-ethylcarbamimodoyl]urea (compound 8918). It acts by binding to the phosphopantetheine pocket in the active site. Inhibition by compound 8918 kills M.tuberculosis. Its function is as follows. Transfers the 4'-phosphopantetheine moiety from coenzyme A to a Ser of acyl-carrier-protein. Involved in post-translational modification of various type-I polyketide synthases required for the formation of both mycolic acids and lipid virulence factors. Acts on Pks13, Mas, PpsA, PpsB, PpsC and PpsD. Also acts on AcpM, the meromycolate extension acyl carrier protein. In addition, is involved in the activation of the acyl carrier protein MbtL and the nonribosomal peptides synthases MbtB and MbtE, which are involved in the biosynthesis of the siderophore mycobactin. In terms of biological role, required for the replication and survival of Mycobacterium during the acute and chronic phases of infection in mice. The sequence is that of 4'-phosphopantetheinyl transferase PptT from Mycobacterium tuberculosis (strain ATCC 25618 / H37Rv).